A 197-amino-acid chain; its full sequence is MYTRPLARLIEHLQRLPGIGPKTAQRLAFHLLRRPKSEALQLAQALVEATEQIGVCSRCFNLSAEDPCDICRQPGRQGETICVVAEPRDLVAIERTREFKGHYHVLGGLINPMEGIGPEQLRIKELLQRVGADTVKEVILAINPSTEGEMTTMYLSKYVKVLGPRVTRIAFGLPVGGDLEYADEMTLARALEGRREI.

A C4-type zinc finger spans residues 56 to 71 (CSRCFNLSAEDPCDIC). Residues 79–174 (ETICVVAEPR…RVTRIAFGLP (96 aa)) form the Toprim domain.

It belongs to the RecR family.

In terms of biological role, may play a role in DNA repair. It seems to be involved in an RecBC-independent recombinational process of DNA repair. It may act with RecF and RecO. This chain is Recombination protein RecR, found in Gloeobacter violaceus (strain ATCC 29082 / PCC 7421).